A 567-amino-acid polypeptide reads, in one-letter code: Oxygen-dependent choline dehydrogenase (567 aa).

6–35 serves as a coordination point for FAD; the sequence is DYIIVGAGSAGNTLATRLTEDEGVTVLLLE. H475 serves as the catalytic Proton acceptor.

The protein belongs to the GMC oxidoreductase family. FAD serves as cofactor.

It catalyses the reaction choline + A = betaine aldehyde + AH2. The enzyme catalyses betaine aldehyde + NAD(+) + H2O = glycine betaine + NADH + 2 H(+). Its pathway is amine and polyamine biosynthesis; betaine biosynthesis via choline pathway; betaine aldehyde from choline (cytochrome c reductase route): step 1/1. Functionally, involved in the biosynthesis of the osmoprotectant glycine betaine. Catalyzes the oxidation of choline to betaine aldehyde and betaine aldehyde to glycine betaine at the same rate. This Pseudomonas fluorescens (strain SBW25) protein is Oxygen-dependent choline dehydrogenase.